Consider the following 921-residue polypeptide: Isoleucine--tRNA ligase (921 aa).

Residues 57-67 carry the 'HIGH' region motif; it reads PYANGDIHMGH. Glu552 is a binding site for L-isoleucyl-5'-AMP. The short motif at 593 to 597 is the 'KMSKS' region element; it reads KMSKS. Lys596 lines the ATP pocket. Zn(2+)-binding residues include Cys887, Cys890, Cys907, and Cys910.

The protein belongs to the class-I aminoacyl-tRNA synthetase family. IleS type 1 subfamily. In terms of assembly, monomer. Zn(2+) serves as cofactor.

It localises to the cytoplasm. The enzyme catalyses tRNA(Ile) + L-isoleucine + ATP = L-isoleucyl-tRNA(Ile) + AMP + diphosphate. Its function is as follows. Catalyzes the attachment of isoleucine to tRNA(Ile). As IleRS can inadvertently accommodate and process structurally similar amino acids such as valine, to avoid such errors it has two additional distinct tRNA(Ile)-dependent editing activities. One activity is designated as 'pretransfer' editing and involves the hydrolysis of activated Val-AMP. The other activity is designated 'posttransfer' editing and involves deacylation of mischarged Val-tRNA(Ile). The protein is Isoleucine--tRNA ligase of Halalkalibacterium halodurans (strain ATCC BAA-125 / DSM 18197 / FERM 7344 / JCM 9153 / C-125) (Bacillus halodurans).